A 540-amino-acid chain; its full sequence is Probable ATP-dependent RNA helicase DDX28 (540 aa).

Residues 3 to 18 (LTRPVRLFSLVTRLLL) carry the Mitochondrial targeting signal motif. A Q motif motif is present at residues 126-156 (GSFADLGLEPRVLHALQEAAPEVVQPTTVQS). In terms of domain architecture, Helicase ATP-binding spans 159–351 (IPSLLRGRHV…NKVASPDAVT (193 aa)). 172–179 (AETGSGKT) contributes to the ATP binding site. Positions 180 to 191 (LSYLLPLLQRLL) match the Nuclear export signal motif. A DEAD motif is present at residues 286–289 (DEAD). The Helicase C-terminal domain occupies 377-536 (KVAELVHILK…GLASSVKEPL (160 aa)). The Nuclear localization signal signature appears at 520-523 (RRRR).

The protein belongs to the DEAD box helicase family. As to quaternary structure, monomer. Found in a complex with GRSF1, DHX30, FASTKD2 and FASTKD5. Associates with the 16S mitochondrial rRNA (16S mt-rRNA) and with the mitochondrial ribosome large subunit (39S). As to expression, expressed in all tissues tested, including brain, placenta, lung, liver, skeletal muscle, kidney, pancreas, leukocytes, colon, small intestine, ovary and prostate.

The protein resides in the nucleus. Its subcellular location is the mitochondrion. The protein localises to the mitochondrion matrix. It localises to the mitochondrion nucleoid. It carries out the reaction ATP + H2O = ADP + phosphate + H(+). Plays an essential role in facilitating the proper assembly of the mitochondrial large ribosomal subunit and its helicase activity is essential for this function. May be involved in RNA processing or transport. Has RNA and Mg(2+)-dependent ATPase activity. This is Probable ATP-dependent RNA helicase DDX28 (DDX28) from Homo sapiens (Human).